A 98-amino-acid polypeptide reads, in one-letter code: NADH-ubiquinone oxidoreductase chain 4L (98 aa).

3 helical membrane-spanning segments follow: residues 1–21, 26–46, and 59–79; these read MTPIQFTFSSAFLLGLSGLAF, LLSALLCLEGMMLSLFIALSL, and APMLLLAFSACEASVGLALMV.

The protein belongs to the complex I subunit 4L family.

Its subcellular location is the mitochondrion membrane. The catalysed reaction is a ubiquinone + NADH + 5 H(+)(in) = a ubiquinol + NAD(+) + 4 H(+)(out). Its function is as follows. Core subunit of the mitochondrial membrane respiratory chain NADH dehydrogenase (Complex I) which catalyzes electron transfer from NADH through the respiratory chain, using ubiquinone as an electron acceptor. Part of the enzyme membrane arm which is embedded in the lipid bilayer and involved in proton translocation. This Tetraodon nigroviridis (Spotted green pufferfish) protein is NADH-ubiquinone oxidoreductase chain 4L (MT-ND4L).